Consider the following 218-residue polypeptide: ATP phosphoribosyltransferase (218 aa).

It belongs to the ATP phosphoribosyltransferase family. Short subfamily. Heteromultimer composed of HisG and HisZ subunits.

Its subcellular location is the cytoplasm. It catalyses the reaction 1-(5-phospho-beta-D-ribosyl)-ATP + diphosphate = 5-phospho-alpha-D-ribose 1-diphosphate + ATP. It participates in amino-acid biosynthesis; L-histidine biosynthesis; L-histidine from 5-phospho-alpha-D-ribose 1-diphosphate: step 1/9. In terms of biological role, catalyzes the condensation of ATP and 5-phosphoribose 1-diphosphate to form N'-(5'-phosphoribosyl)-ATP (PR-ATP). Has a crucial role in the pathway because the rate of histidine biosynthesis seems to be controlled primarily by regulation of HisG enzymatic activity. This chain is ATP phosphoribosyltransferase, found in Acaryochloris marina (strain MBIC 11017).